The sequence spans 659 residues: Putative oxidoreductase AegA (659 aa).

4Fe-4S ferredoxin-type domains are found at residues Arg-3–Cys-22, His-47–Asp-77, Asp-78–Thr-107, Val-114–Asp-147, and Asp-218–Leu-252. Residues Cys-12, Cys-15, Cys-18, Cys-22, Cys-56, Cys-59, Cys-64, Cys-68, Cys-87, Cys-90, Cys-93, Cys-97, Cys-121, Cys-124, Cys-133, Cys-137, Cys-227, Cys-230, Cys-236, and Cys-240 each coordinate [4Fe-4S] cluster.

[4Fe-4S] cluster is required as a cofactor.

Involved in formate-dependent uric acid degradation under microaerobic and anaerobic conditions. May reduce the enzymes necessary for uric acid degradation. The chain is Putative oxidoreductase AegA from Escherichia coli (strain K12).